The following is a 508-amino-acid chain: ADP-ribosylarginine hydrolase CG3568 (508 aa).

Positions 209, 349, 351, 353, 354, 355, 390, 441, 448, 449, 459, and 460 each coordinate ADP-D-ribose.

It carries out the reaction N(omega)-(ADP-D-ribosyl)-L-arginyl-[protein] + H2O = ADP-D-ribose + L-arginyl-[protein]. The catalysed reaction is N(omega)-(ADP-D-ribosyl)-L-arginine + H2O = ADP-D-ribose + L-arginine. Its function is as follows. Protein ADP-ribosyl hydrolase that specifically removes mono-ADP-ribosyl modifications from protein arginine residues. The polypeptide is ADP-ribosylarginine hydrolase CG3568 (Drosophila melanogaster (Fruit fly)).